We begin with the raw amino-acid sequence, 309 residues long: Aspartate carbamoyltransferase catalytic subunit (309 aa).

Carbamoyl phosphate-binding residues include Arg-57 and Thr-58. Lys-86 contributes to the L-aspartate binding site. Arg-107, His-135, and Gln-138 together coordinate carbamoyl phosphate. L-aspartate-binding residues include Arg-168 and Arg-228. Positions 267 and 268 each coordinate carbamoyl phosphate.

The protein belongs to the aspartate/ornithine carbamoyltransferase superfamily. ATCase family. In terms of assembly, heterooligomer of catalytic and regulatory chains.

The catalysed reaction is carbamoyl phosphate + L-aspartate = N-carbamoyl-L-aspartate + phosphate + H(+). It participates in pyrimidine metabolism; UMP biosynthesis via de novo pathway; (S)-dihydroorotate from bicarbonate: step 2/3. In terms of biological role, catalyzes the condensation of carbamoyl phosphate and aspartate to form carbamoyl aspartate and inorganic phosphate, the committed step in the de novo pyrimidine nucleotide biosynthesis pathway. In Nitrosopumilus maritimus (strain SCM1), this protein is Aspartate carbamoyltransferase catalytic subunit.